Here is a 901-residue protein sequence, read N- to C-terminus: Protein translocase subunit SecA (901 aa).

Residues Q87, 105–109 (GEGKT), and D512 contribute to the ATP site. The disordered stretch occupies residues 852–901 (AQMQQLSHQDDDSAAAAALAAQTGDRKVGRNDPCPCGSGKKYKQCHGRLS). Positions 885, 887, 896, and 897 each coordinate Zn(2+). Positions 891–901 (KKYKQCHGRLS) are enriched in basic residues.

Belongs to the SecA family. As to quaternary structure, monomer and homodimer. Part of the essential Sec protein translocation apparatus which comprises SecA, SecYEG and auxiliary proteins SecDF-YajC and YidC. Zn(2+) serves as cofactor.

The protein resides in the cell inner membrane. It localises to the cytoplasm. It carries out the reaction ATP + H2O + cellular proteinSide 1 = ADP + phosphate + cellular proteinSide 2.. Its function is as follows. Part of the Sec protein translocase complex. Interacts with the SecYEG preprotein conducting channel. Has a central role in coupling the hydrolysis of ATP to the transfer of proteins into and across the cell membrane, serving both as a receptor for the preprotein-SecB complex and as an ATP-driven molecular motor driving the stepwise translocation of polypeptide chains across the membrane. This Citrobacter koseri (strain ATCC BAA-895 / CDC 4225-83 / SGSC4696) protein is Protein translocase subunit SecA.